The chain runs to 327 residues: Aspartate--ammonia ligase (327 aa).

Belongs to the class-II aminoacyl-tRNA synthetase family. AsnA subfamily.

The protein resides in the cytoplasm. The catalysed reaction is L-aspartate + NH4(+) + ATP = L-asparagine + AMP + diphosphate + H(+). The protein operates within amino-acid biosynthesis; L-asparagine biosynthesis; L-asparagine from L-aspartate (ammonia route): step 1/1. The sequence is that of Aspartate--ammonia ligase from Bacillus cytotoxicus (strain DSM 22905 / CIP 110041 / 391-98 / NVH 391-98).